The following is a 282-amino-acid chain: Epoxide hydrolase LasB (282 aa).

Residues 1–133 (MPAETVRKEV…TDSSWTARPA (133 aa)) form a lsd19A region. Residue Y14 participates in substrate binding. The Proton acceptor; for 5-exo epoxide-opening cyclization activity role is filled by D38. Positions 65 and 146 each coordinate substrate. The segment at 134–282 (PDEERRKELA…TDVSLLDPAA (149 aa)) is lsd19B. D170 (proton acceptor; for 6-endo epoxide-opening cyclization activity) is an active-site residue. Substrate contacts are provided by R177, E197, and Y251.

Functionally, epoxide hydrolase responsible for the double epoxide-opening cyclization of bisepoxyprelasalocid A to form lasalocid A, a polyether antibiotic. In vitro, accepts various substrate analogs differing in the left segment of lasalocid and epoxide stereochemistry to afford products with excellent regioselectivity. This is Epoxide hydrolase LasB (lsd19) from Streptomyces lasalocidi (Streptomyces lasaliensis).